The following is a 143-amino-acid chain: D-aminoacyl-tRNA deacylase (143 aa).

Positions 135-136 (GP) match the Gly-cisPro motif, important for rejection of L-amino acids motif.

The protein belongs to the DTD family. In terms of assembly, homodimer.

The protein localises to the cytoplasm. It catalyses the reaction glycyl-tRNA(Ala) + H2O = tRNA(Ala) + glycine + H(+). It carries out the reaction a D-aminoacyl-tRNA + H2O = a tRNA + a D-alpha-amino acid + H(+). An aminoacyl-tRNA editing enzyme that deacylates mischarged D-aminoacyl-tRNAs. Also deacylates mischarged glycyl-tRNA(Ala), protecting cells against glycine mischarging by AlaRS. Acts via tRNA-based rather than protein-based catalysis; rejects L-amino acids rather than detecting D-amino acids in the active site. By recycling D-aminoacyl-tRNA to D-amino acids and free tRNA molecules, this enzyme counteracts the toxicity associated with the formation of D-aminoacyl-tRNA entities in vivo and helps enforce protein L-homochirality. This Nocardia farcinica (strain IFM 10152) protein is D-aminoacyl-tRNA deacylase.